We begin with the raw amino-acid sequence, 93 residues long: Small ribosomal subunit protein uS19 (93 aa).

This sequence belongs to the universal ribosomal protein uS19 family.

Functionally, protein S19 forms a complex with S13 that binds strongly to the 16S ribosomal RNA. This Geotalea uraniireducens (strain Rf4) (Geobacter uraniireducens) protein is Small ribosomal subunit protein uS19.